A 177-amino-acid polypeptide reads, in one-letter code: Large ribosomal subunit protein uL6 (177 aa).

It belongs to the universal ribosomal protein uL6 family. As to quaternary structure, part of the 50S ribosomal subunit.

Functionally, this protein binds to the 23S rRNA, and is important in its secondary structure. It is located near the subunit interface in the base of the L7/L12 stalk, and near the tRNA binding site of the peptidyltransferase center. The protein is Large ribosomal subunit protein uL6 of Rhizobium etli (strain CIAT 652).